The following is a 463-amino-acid chain: uncharacterized protein (463 aa).

Transmembrane regions (helical) follow at residues 6 to 26 (ILPV…FMLL), 31 to 51 (TFIS…SLSA), 60 to 80 (FIYA…IVSM), 101 to 123 (VRGP…LFFW), 130 to 152 (LIGA…AAMA), 189 to 209 (ASIP…FIMI), 242 to 262 (SILA…MLLF), 269 to 289 (ATAL…FFVY), 304 to 324 (GFKF…FFYL), 413 to 433 (AIWV…AAIC), and 443 to 463 (KNFI…VMML).

It is found in the cell membrane. This is an uncharacterized protein from Bacillus subtilis (strain 168).